A 358-amino-acid polypeptide reads, in one-letter code: Alanine racemase (358 aa).

Lysine 34 (proton acceptor; specific for D-alanine) is an active-site residue. Lysine 34 bears the N6-(pyridoxal phosphate)lysine mark. Residue arginine 130 participates in substrate binding. Tyrosine 254 serves as the catalytic Proton acceptor; specific for L-alanine. Position 302 (methionine 302) interacts with substrate.

This sequence belongs to the alanine racemase family. It depends on pyridoxal 5'-phosphate as a cofactor.

The enzyme catalyses L-alanine = D-alanine. It functions in the pathway amino-acid biosynthesis; D-alanine biosynthesis; D-alanine from L-alanine: step 1/1. Its function is as follows. Catalyzes the interconversion of L-alanine and D-alanine. May also act on other amino acids. This chain is Alanine racemase (alr), found in Stutzerimonas stutzeri (strain A1501) (Pseudomonas stutzeri).